Here is a 422-residue protein sequence, read N- to C-terminus: N-acylglucosamine 2-epimerase (422 aa).

The leucine-zipper stretch occupies residues 185–206 (LLNLVEQLGEADEELAGISAEL).

It belongs to the N-acylglucosamine 2-epimerase family. In terms of assembly, homodimer. Forms a heterodimer with renin and inhibits its activity.

The catalysed reaction is an N-acyl-D-glucosamine = an N-acyl-D-mannosamine. Its pathway is amino-sugar metabolism; N-acetylneuraminate degradation. In terms of biological role, catalyzes the interconversion of N-acetylglucosamine to N-acetylmannosamine. Involved in the N-glycolylneuraminic acid (Neu5Gc) degradation pathway. The chain is N-acylglucosamine 2-epimerase (RENBP) from Bos taurus (Bovine).